The following is a 144-amino-acid chain: Putative RNase YutE (144 aa).

Arg-96 is a catalytic residue. The RX(4)HXY motif signature appears at 96–103 (RKTLVQQY).

This sequence belongs to the HepT RNase toxin family. As to quaternary structure, homodimer, probably forms a complex with cognate antitoxin YutD.

In terms of biological role, probable toxic component of a putative type VII toxin-antitoxin (TA) system, probably an RNase. Probably neutralized by cognate antitoxin YutD. This chain is Putative RNase YutE (yutE), found in Bacillus subtilis (strain 168).